The chain runs to 338 residues: MENLDALVAQALEAVQRAEDITTLEQIRVQFLGKKGELTQVMKTLGNLPAEERPKVGALINDAKERVTDVLNARKAGFEEAELNARLAAECIDVTLPGRGQTTGGLHPITRTLERIEQFFTHIGYGIAEGPEVEDDYHNFEALNIPGHHPARAMHDTFYFNANMLLRTHTSPVQVRTMESSQPPIRIVCPGRVYRCDSDITHSPMFHQVEGLLIDRGINFADLKGTIEEFLRVFFEKELAVRFRPSFFPFTEPSAEVDIQCVMCSGKGCRVCKQTGWLEVMGCGMVHPNVLRMSGIDPEEFQGFAFGMGAERLAMLRYGVNDLRLFFDNDLRFLAQFR.

E252 is a Mg(2+) binding site.

This sequence belongs to the class-II aminoacyl-tRNA synthetase family. Phe-tRNA synthetase alpha subunit type 1 subfamily. Tetramer of two alpha and two beta subunits. Mg(2+) is required as a cofactor.

Its subcellular location is the cytoplasm. It catalyses the reaction tRNA(Phe) + L-phenylalanine + ATP = L-phenylalanyl-tRNA(Phe) + AMP + diphosphate + H(+). In Pseudomonas entomophila (strain L48), this protein is Phenylalanine--tRNA ligase alpha subunit.